Here is a 245-residue protein sequence, read N- to C-terminus: tRNA pseudouridine synthase A (245 aa).

Asp-52 functions as the Nucleophile in the catalytic mechanism. Residue Tyr-111 participates in substrate binding.

Belongs to the tRNA pseudouridine synthase TruA family. Homodimer.

The enzyme catalyses uridine(38/39/40) in tRNA = pseudouridine(38/39/40) in tRNA. Functionally, formation of pseudouridine at positions 38, 39 and 40 in the anticodon stem and loop of transfer RNAs. This chain is tRNA pseudouridine synthase A, found in Rickettsia canadensis (strain McKiel).